The chain runs to 357 residues: Peptide chain release factor 1 (357 aa).

Position 232 is an N5-methylglutamine (Gln-232). The span at 282 to 291 shows a compositional bias: basic and acidic residues; that stretch reads KQRAEQEAAR. Positions 282 to 302 are disordered; it reads KQRAEQEAARRSQVGTGDRSE.

This sequence belongs to the prokaryotic/mitochondrial release factor family. Methylated by PrmC. Methylation increases the termination efficiency of RF1.

It is found in the cytoplasm. In terms of biological role, peptide chain release factor 1 directs the termination of translation in response to the peptide chain termination codons UAG and UAA. In Solidesulfovibrio magneticus (strain ATCC 700980 / DSM 13731 / RS-1) (Desulfovibrio magneticus), this protein is Peptide chain release factor 1.